Consider the following 200-residue polypeptide: MARYIGPKAKISRRFNEPIFGPSKALQKKNYPPGQHGKIRKKKSEYAIQLMEKGKAKYIYGLLEKQFANLFYKAAKKKGVTGELLLQYLETRLDNVVYRLGITPTRRSARQLVSHKHITVNGKIVNIPSYALKVGDIIGLTEKTKSSNAITERISSHSHNKNNWLEWDSKQMIGKVMSLPHREEIPEKINEQSIVELYSK.

The S4 RNA-binding domain maps to 91 to 150 (TRLDNVVYRLGITPTRRSARQLVSHKHITVNGKIVNIPSYALKVGDIIGLTEKTKSSNAI).

Belongs to the universal ribosomal protein uS4 family. As to quaternary structure, part of the 30S ribosomal subunit. Contacts protein S5. The interaction surface between S4 and S5 is involved in control of translational fidelity.

One of the primary rRNA binding proteins, it binds directly to 16S rRNA where it nucleates assembly of the body of the 30S subunit. Its function is as follows. With S5 and S12 plays an important role in translational accuracy. This is Small ribosomal subunit protein uS4 from Amoebophilus asiaticus (strain 5a2).